The primary structure comprises 603 residues: DNA mismatch repair protein MutL (603 aa).

Belongs to the DNA mismatch repair MutL/HexB family.

This protein is involved in the repair of mismatches in DNA. It is required for dam-dependent methyl-directed DNA mismatch repair. May act as a 'molecular matchmaker', a protein that promotes the formation of a stable complex between two or more DNA-binding proteins in an ATP-dependent manner without itself being part of a final effector complex. This Nitrobacter hamburgensis (strain DSM 10229 / NCIMB 13809 / X14) protein is DNA mismatch repair protein MutL.